The following is a 309-amino-acid chain: Glutaminase (309 aa).

Residues serine 64, asparagine 114, glutamate 160, asparagine 167, tyrosine 191, tyrosine 243, and valine 261 each contribute to the substrate site.

The protein belongs to the glutaminase family. Homotetramer.

It carries out the reaction L-glutamine + H2O = L-glutamate + NH4(+). The protein is Glutaminase of Methylobacterium radiotolerans (strain ATCC 27329 / DSM 1819 / JCM 2831 / NBRC 15690 / NCIMB 10815 / 0-1).